The following is a 170-amino-acid chain: Elicitin-like protein 1 (170 aa).

An N-terminal signal peptide occupies residues 1 to 19 (MFSKTLVVLAAVAAVTVNG). Intrachain disulfides connect Cys-25-Cys-91, Cys-47-Cys-76, and Cys-71-Cys-118. Residues 122–170 (GGGSTPTTAPPTSTTPTTAPPTGTTPTTAPPAGTTPGVTPSPTTPKPAC) are disordered. Low complexity predominate over residues 126 to 162 (TPTTAPPTSTTPTTAPPTGTTPTTAPPAGTTPGVTPS).

It belongs to the elicitin family.

It is found in the secreted. Its function is as follows. Induces local and distal defense responses (incompatible hypersensitive reaction) in plants from the solanaceae and cruciferae families. Elicits leaf necrosis and causes the accumulation of pathogenesis-related proteins. Might interact with the lipidic molecules of the plasma membrane. The protein is Elicitin-like protein 1 (POD-1) of Pythium oligandrum (Mycoparasitic fungus).